The following is a 2381-amino-acid chain: Protein Ycf2 (2381 aa).

1655 to 1662 is a binding site for ATP; it reads GPMETGRS.

This sequence belongs to the Ycf2 family.

Its subcellular location is the plastid. The protein localises to the chloroplast stroma. Its function is as follows. Probable ATPase of unknown function. Its presence in a non-photosynthetic plant (Epifagus virginiana) and experiments in tobacco indicate that it has an essential function which is probably not related to photosynthesis. The polypeptide is Protein Ycf2 (Angiopteris evecta (Mule's foot fern)).